Consider the following 165-residue polypeptide: MYVEMIDETGQVSEEIKKQTLELLDFAAQKLGKKDKEMAVTFVTNERSHELNLEYRDTDRPTDVISLEYKPELDITFDEEDLAENPELAEMMGEFDSYIGELFISIDKAREQAEEYGHSYEREMGFLAVHGFLHINGYDHYTPEEEAEMFGLQEEILTAYGLTRQ.

Positions 130, 134, and 140 each coordinate Zn(2+).

It belongs to the endoribonuclease YbeY family. The cofactor is Zn(2+).

The protein localises to the cytoplasm. Functionally, single strand-specific metallo-endoribonuclease involved in late-stage 70S ribosome quality control and in maturation of the 3' terminus of the 16S rRNA. This is Endoribonuclease YbeY from Streptococcus thermophilus (strain CNRZ 1066).